A 502-amino-acid chain; its full sequence is NAD(P)H-quinone oxidoreductase chain 4, chloroplastic (502 aa).

The next 14 membrane-spanning stretches (helical) occupy residues 4-24, 37-57, 86-106, 113-131, 136-156, 169-189, 210-230, 244-264, 274-294, 307-327, 332-352, 388-408, 418-438, and 464-484; these read FPWLTVIVVLPISAGSSIFFV, YTICICLLEILLTTYAFCYHF, GLSIGPILLTGFITTLATLAA, SRLFHFLMLAMYSGQVGSF, LLLFFLMWELELIPVYLLLSM, FILYTAGGSIFLLMGVSGMGL, GLEIIFYFGFLIAYAVKSPII, HYSTCMLLAGILLKMGAYGLV, AHSIFSPWLVIVGAIQIIYAA, IAYSSVSHMGFTLIGIGSITD, GAILQIISHGFIGAALFFLAG, LALPGMSGFVAELVVFFGIIT, IVISFVMAIGMILTPIYSLSM, and LFVSICIFLPVVGIGIYPDFV.

Belongs to the complex I subunit 4 family.

The protein localises to the plastid. The protein resides in the chloroplast thylakoid membrane. The catalysed reaction is a plastoquinone + NADH + (n+1) H(+)(in) = a plastoquinol + NAD(+) + n H(+)(out). The enzyme catalyses a plastoquinone + NADPH + (n+1) H(+)(in) = a plastoquinol + NADP(+) + n H(+)(out). The sequence is that of NAD(P)H-quinone oxidoreductase chain 4, chloroplastic from Calycanthus floridus var. glaucus (Eastern sweetshrub).